Reading from the N-terminus, the 84-residue chain is U21-theraphotoxin-Cg1a 3 (84 aa).

The first 21 residues, 1–21, serve as a signal peptide directing secretion; that stretch reads MKVSVLITLAVLGVMFLLTSA. Residues 22-47 constitute a propeptide that is removed on maturation; sequence EERGSDQMDSPAWLKSMERIFQSEER. Cystine bridges form between C49-C63, C56-C68, and C62-C76. Residue V82 is modified to Valine amide.

Belongs to the neurotoxin 10 (Hwtx-1) family. 05 (F4a) subfamily. As to expression, expressed by the venom gland.

Its subcellular location is the secreted. Probable ion channel inhibitor. This is U21-theraphotoxin-Cg1a 3 from Chilobrachys guangxiensis (Chinese earth tiger tarantula).